Reading from the N-terminus, the 382-residue chain is ATP phosphoribosyltransferase regulatory subunit (382 aa).

It belongs to the class-II aminoacyl-tRNA synthetase family. HisZ subfamily. As to quaternary structure, heteromultimer composed of HisG and HisZ subunits.

It localises to the cytoplasm. It functions in the pathway amino-acid biosynthesis; L-histidine biosynthesis; L-histidine from 5-phospho-alpha-D-ribose 1-diphosphate: step 1/9. Functionally, required for the first step of histidine biosynthesis. May allow the feedback regulation of ATP phosphoribosyltransferase activity by histidine. The polypeptide is ATP phosphoribosyltransferase regulatory subunit (Burkholderia ambifaria (strain ATCC BAA-244 / DSM 16087 / CCUG 44356 / LMG 19182 / AMMD) (Burkholderia cepacia (strain AMMD))).